The primary structure comprises 253 residues: Imidazole glycerol phosphate synthase subunit HisF (253 aa).

Residues D11 and D130 contribute to the active site.

Belongs to the HisA/HisF family. As to quaternary structure, heterodimer of HisH and HisF.

The protein localises to the cytoplasm. It catalyses the reaction 5-[(5-phospho-1-deoxy-D-ribulos-1-ylimino)methylamino]-1-(5-phospho-beta-D-ribosyl)imidazole-4-carboxamide + L-glutamine = D-erythro-1-(imidazol-4-yl)glycerol 3-phosphate + 5-amino-1-(5-phospho-beta-D-ribosyl)imidazole-4-carboxamide + L-glutamate + H(+). It functions in the pathway amino-acid biosynthesis; L-histidine biosynthesis; L-histidine from 5-phospho-alpha-D-ribose 1-diphosphate: step 5/9. Functionally, IGPS catalyzes the conversion of PRFAR and glutamine to IGP, AICAR and glutamate. The HisF subunit catalyzes the cyclization activity that produces IGP and AICAR from PRFAR using the ammonia provided by the HisH subunit. This is Imidazole glycerol phosphate synthase subunit HisF from Clostridium botulinum (strain Alaska E43 / Type E3).